The following is a 752-amino-acid chain: Iron-sulfur clusters transporter ABCB7, mitochondrial (752 aa).

Residues 1-22 constitute a mitochondrion transit peptide; that stretch reads MALLAIHSWRWAAAAVAFEKHK. At 23 to 140 the chain is on the mitochondrial matrix side; the sequence is HSAVLTRSLV…KDRPDLRARV (118 aa). The 297-residue stretch at 140–436 folds into the ABC transmembrane type-1 domain; it reads VAISLGFLGG…LGTVYRETRQ (297 aa). The helical transmembrane segment at 141 to 161 threads the bilayer; it reads AISLGFLGGAKAMNIVVPFMF. Topologically, residues 162 to 185 are mitochondrial intermembrane; sequence KYAVDSLNQMSGNMLNLSDAPNTV. A helical transmembrane segment spans residues 186 to 206; sequence ATMATAVLIGYGVSRAGAAFF. Over 207–259 the chain is Mitochondrial matrix; that stretch reads NEVRNAVFGKVAQNSIRRIAKNVFLHLHNLDLGFHLSRQTGALSKAIDRGTRG. N6-acetyllysine occurs at positions 216 and 251. A helical transmembrane segment spans residues 260–280; sequence ISFVLSALVFNLLPIVFEMTL. Residues 281–290 are Mitochondrial intermembrane-facing; sequence VSSVLYYKCG. Residues 291–311 form a helical membrane-spanning segment; that stretch reads AQFALVTLGTLGAYTAFTVAV. At 312–382 the chain is on the mitochondrial matrix side; that stretch reads TRWRTRFRIE…TLAMLNFGQS (71 aa). Glutathione is bound at residue 315 to 319; the sequence is RTRFR. Ser336 carries the post-translational modification Phosphoserine. Tyr340 bears the Phosphotyrosine mark. Thr342 carries the post-translational modification Phosphothreonine. Position 350 is an N6-acetyllysine (Lys350). A glutathione-binding site is contributed by 378–381; sequence NFGQ. A helical membrane pass occupies residues 383–403; the sequence is AIFSVGLTAIMVLASQGIVAG. Topologically, residues 404-409 are mitochondrial intermembrane; the sequence is ALTVGD. A helical transmembrane segment spans residues 410–430; the sequence is LVMVNGLLFQLSLPLNFLGTV. Glutathione is bound at residue Gly428. Residues 431–752 are Mitochondrial matrix-facing; sequence YRETRQALID…SVKGCGNCSC (322 aa). In terms of domain architecture, ABC transporter spans 472-706; it reads VAFDNVHFEY…SSSIYSEMWH (235 aa). ATP contacts are provided by residues Tyr481 and 505–516; that span reads GGSGSGKSTIVR.

Belongs to the ABC transporter superfamily. ABCB family. Heavy Metal importer (TC 3.A.1.210) subfamily. Homodimer or heterodimer. Interacts with C10orf88/PAAT. Forms a complex with ABCB10 and FECH, where a dimeric FECH bridges ABCB7 and ABCB10 homodimers; this complex may be required for cellular iron homeostasis, mitochondrial function and heme biosynthesis. Interacts with FECH. Interacts with ATP5F1A. Interacts with COX4I1; this interaction allows the regulation of cellular iron homeostasis and cellular reactive oxygen species (ROS) levels in cardiomyocytes.

It localises to the mitochondrion inner membrane. It carries out the reaction (glutathione)4[2Fe(III)-2S] cluster(in) + ATP + H2O = (glutathione)4[2Fe(III)-2S] cluster(out) + ADP + phosphate + H(+). Exports glutathione-coordinated iron-sulfur clusters such as [2Fe-2S]-(GS)4 cluster from the mitochondria to the cytosol in an ATP-dependent manner allowing the assembly of the cytosolic iron-sulfur (Fe/S) cluster-containing proteins and participates in iron homeostasis. Moreover, through a functional complex formed of ABCB7, FECH and ABCB10, also plays a role in the cellular iron homeostasis, mitochondrial function and heme biosynthesis. In cardiomyocytes, regulates cellular iron homeostasis and cellular reactive oxygen species (ROS) levels through its interaction with COX4I1. May also play a role in hematopoiesis. This Rattus norvegicus (Rat) protein is Iron-sulfur clusters transporter ABCB7, mitochondrial.